The following is a 1336-amino-acid chain: Adhesion G protein-coupled receptor A2 (1336 aa).

The N-terminal stretch at 1–33 (MGAGGRRMPVPPARLLLLPLLPCLLLLAPGTRG) is a signal peptide. The Extracellular segment spans residues 34-769 (APGCPVPIRG…AGGSGAGLHP (736 aa)). N-linked (GlcNAc...) asparagine glycans are attached at residues Asn-84 and Asn-101. LRR repeat units lie at residues 85–106 (GTIT…SFLG), 109–130 (LLEK…AFLG), 133–154 (ELKR…TFQG), and 157–178 (RLLR…VFDE). Asn-162 carries N-linked (GlcNAc...) asparagine glycosylation. The LRRCT domain occupies 190–241 (EFLTCDCRLRWLLPWARNHSLQLSERTLCAYPSALHAHALSSLQESQLRCEG). One can recognise an Ig-like domain in the interval 247 to 344 (THYLIPSLRQ…GNTSKKVEIV (98 aa)). An intrachain disulfide couples Cys-268 to Cys-328. An N-linked (GlcNAc...) asparagine glycan is attached at Asn-275. The RGD signature appears at 362 to 364 (RGD). In terms of domain architecture, GAIN-B spans 594-757 (FRCTTGRPNI…AVLMELNAFP (164 aa)). Asn-602, Asn-691, and Asn-735 each carry an N-linked (GlcNAc...) asparagine glycan. Residues 711–757 (AAWWNQDGPGGWSSEGCRLRYSQPNVSSLYCQHLGNVAVLMELNAFP) are GPS. Cysteines 727 and 741 form a disulfide. Residues 770–790 (VVYPCTALLLLCLFSTIITYI) traverse the membrane as a helical segment. Topologically, residues 791 to 805 (LNHSSIHVSRKGWHM) are cytoplasmic. Residues 806 to 826 (LLNLCFHMAMTSAVFVGGVTL) form a helical membrane-spanning segment. The Extracellular segment spans residues 827–830 (TNYQ). Residues 831–851 (MVCQAVGITLHYSSLSSLLWM) form a helical membrane-spanning segment. Over 852–884 (GVKARVLHKELSWRAPPLEEGEAAPPGPRPMLR) the chain is Cytoplasmic. A helical membrane pass occupies residues 885-905 (FYLIAGGIPLIICGITAAVNI). Topologically, residues 906-922 (HNYRDHSPYCWLVWRPS) are extracellular. Residues 923-943 (LGAFYIPVALILPITWIYFLC) traverse the membrane as a helical segment. Topologically, residues 944-1016 (AGLHLRSHVA…DGVYSPGVQL (73 aa)) are cytoplasmic. The helical transmembrane segment at 1017–1037 (GALMTTHFLYLAMWACGALAV) threads the bilayer. The Extracellular segment spans residues 1038–1044 (SQRWLPR). Residues 1045-1065 (VVCSCLYGVAASALGLFVFTH) form a helical membrane-spanning segment. Residues 1066 to 1336 (HCARRRDVRA…TGLWKSETTV (271 aa)) are Cytoplasmic-facing. Residues 1084-1095 (ASPSASHVPARA) show a composition bias toward low complexity. Residues 1084–1310 (ASPSASHVPA…NGAPKGGKYE (227 aa)) are disordered. The residue at position 1104 (Ser-1104) is a Phosphoserine. Over residues 1110–1124 (GPASLKSSPSGSSGR) the composition is skewed to low complexity. The segment covering 1133–1143 (TNLQVAQSQVC) has biased composition (polar residues). Residues 1166–1186 (PRHHNNLHHGRRVHKSRAKGH) show a composition bias toward basic residues. A compositionally biased stretch (polar residues) spans 1213–1234 (SSESGSLHNSPSDSYPGSSRNS). The short motif at 1333 to 1336 (ETTV) is the PDZ-binding element.

This sequence belongs to the G-protein coupled receptor 2 family. Adhesion G-protein coupled receptor (ADGR) subfamily. As to quaternary structure, interacts with RECK; the interaction is direct. Interacts (via PDZ-binding motif) with DLG1 (via PDZ domains). The cleaved extracellular subunit interacts with the integrin heterodimer ITGAV:ITGB3. In terms of processing, glycosylated. Post-translationally, proteolytically cleaved into two subunits, an extracellular subunit and a seven-transmembrane subunit. Cleaved by thrombin (F2) and MMP1. Also cleaved by MMP9, with lower efficiency. Presence of the protein disulfide-isomerase P4HB at the cell surface is additionally required for shedding of the extracellular subunit, suggesting that the subunits are linked by disulfide bonds. Shedding is enhanced by the growth factor FGF2 and may promote cell survival during angiogenesis. In terms of tissue distribution, abundantly expressed in the vasculature of the developing embryo. Expression in normal adult tissues is specifically vascular with endothelial expression in CNS, including brain and retina and more widespread pericyte expression in the brain and organs, including the kidney, pancreas and corpus luteum.

Its subcellular location is the cell membrane. It localises to the cell projection. The protein resides in the filopodium. In terms of biological role, endothelial receptor which functions together with RECK to enable brain endothelial cells to selectively respond to Wnt7 signals (WNT7A or WNT7B). Plays a key role in Wnt7-specific responses, such as endothelial cell sprouting and migration in the forebrain and neural tube, and establishment of the blood-brain barrier. Acts as a Wnt7-specific coactivator of canonical Wnt signaling: required to deliver RECK-bound Wnt7 to frizzled by assembling a higher-order RECK-ADGRA2-Fzd-LRP5-LRP6 complex. ADGRA2-tethering function does not rely on its G-protein coupled receptor (GPCR) structure but instead on its combined capacity to interact with RECK extracellularly and recruit the Dishevelled scaffolding protein intracellularly. Binds to the glycosaminoglycans heparin, heparin sulfate, chondroitin sulfate and dermatan sulfate. The sequence is that of Adhesion G protein-coupled receptor A2 from Mus musculus (Mouse).